The primary structure comprises 337 residues: Anthranilate phosphoribosyltransferase (337 aa).

Residues glycine 82, 85–86 (GD), threonine 90, 92–95 (NIST), 110–118 (KHGNRAMSS), and threonine 122 each bind 5-phospho-alpha-D-ribose 1-diphosphate. Residue glycine 82 participates in anthranilate binding. Serine 94 is a binding site for Mg(2+). Residue asparagine 113 coordinates anthranilate. Arginine 168 is an anthranilate binding site. Positions 226 and 227 each coordinate Mg(2+).

The protein belongs to the anthranilate phosphoribosyltransferase family. In terms of assembly, homodimer. Mg(2+) serves as cofactor.

The catalysed reaction is N-(5-phospho-beta-D-ribosyl)anthranilate + diphosphate = 5-phospho-alpha-D-ribose 1-diphosphate + anthranilate. It functions in the pathway amino-acid biosynthesis; L-tryptophan biosynthesis; L-tryptophan from chorismate: step 2/5. Functionally, catalyzes the transfer of the phosphoribosyl group of 5-phosphorylribose-1-pyrophosphate (PRPP) to anthranilate to yield N-(5'-phosphoribosyl)-anthranilate (PRA). In Phenylobacterium zucineum (strain HLK1), this protein is Anthranilate phosphoribosyltransferase.